A 425-amino-acid chain; its full sequence is Serine--tRNA ligase (425 aa).

227 to 229 (TAE) lines the L-serine pocket. Residues 258 to 260 (RRE) and Val-274 contribute to the ATP site. Glu-281 contacts L-serine. 347–350 (ETHS) is an ATP binding site. Position 382 (Thr-382) interacts with L-serine.

This sequence belongs to the class-II aminoacyl-tRNA synthetase family. Type-1 seryl-tRNA synthetase subfamily. In terms of assembly, homodimer. The tRNA molecule binds across the dimer.

The protein resides in the cytoplasm. The enzyme catalyses tRNA(Ser) + L-serine + ATP = L-seryl-tRNA(Ser) + AMP + diphosphate + H(+). The catalysed reaction is tRNA(Sec) + L-serine + ATP = L-seryl-tRNA(Sec) + AMP + diphosphate + H(+). It functions in the pathway aminoacyl-tRNA biosynthesis; selenocysteinyl-tRNA(Sec) biosynthesis; L-seryl-tRNA(Sec) from L-serine and tRNA(Sec): step 1/1. In terms of biological role, catalyzes the attachment of serine to tRNA(Ser). Is also able to aminoacylate tRNA(Sec) with serine, to form the misacylated tRNA L-seryl-tRNA(Sec), which will be further converted into selenocysteinyl-tRNA(Sec). The chain is Serine--tRNA ligase from Deinococcus radiodurans (strain ATCC 13939 / DSM 20539 / JCM 16871 / CCUG 27074 / LMG 4051 / NBRC 15346 / NCIMB 9279 / VKM B-1422 / R1).